A 425-amino-acid chain; its full sequence is Glutamate-1-semialdehyde 2,1-aminomutase (425 aa).

Lys265 bears the N6-(pyridoxal phosphate)lysine mark.

It belongs to the class-III pyridoxal-phosphate-dependent aminotransferase family. HemL subfamily. Homodimer. Pyridoxal 5'-phosphate serves as cofactor.

Its subcellular location is the cytoplasm. The enzyme catalyses (S)-4-amino-5-oxopentanoate = 5-aminolevulinate. Its pathway is porphyrin-containing compound metabolism; protoporphyrin-IX biosynthesis; 5-aminolevulinate from L-glutamyl-tRNA(Glu): step 2/2. This chain is Glutamate-1-semialdehyde 2,1-aminomutase, found in Chromobacterium violaceum (strain ATCC 12472 / DSM 30191 / JCM 1249 / CCUG 213 / NBRC 12614 / NCIMB 9131 / NCTC 9757 / MK).